A 258-amino-acid polypeptide reads, in one-letter code: Ribosomal RNA small subunit methyltransferase A (258 aa).

Positions 13, 15, 40, 61, 86, and 106 each coordinate S-adenosyl-L-methionine.

The protein belongs to the class I-like SAM-binding methyltransferase superfamily. rRNA adenine N(6)-methyltransferase family. RsmA subfamily.

It is found in the cytoplasm. The catalysed reaction is adenosine(1518)/adenosine(1519) in 16S rRNA + 4 S-adenosyl-L-methionine = N(6)-dimethyladenosine(1518)/N(6)-dimethyladenosine(1519) in 16S rRNA + 4 S-adenosyl-L-homocysteine + 4 H(+). Specifically dimethylates two adjacent adenosines (A1518 and A1519) in the loop of a conserved hairpin near the 3'-end of 16S rRNA in the 30S particle. May play a critical role in biogenesis of 30S subunits. This chain is Ribosomal RNA small subunit methyltransferase A, found in Coxiella burnetii (strain CbuG_Q212) (Coxiella burnetii (strain Q212)).